Here is a 1589-residue protein sequence, read N- to C-terminus: Sterile alpha motif domain-containing protein 9 (1589 aa).

Residues 14–78 (WTKEDVNQWL…ELFKELRKTA (65 aa)) form the SAM domain. Residues 83 to 135 (IQTSKMGKPSKNAPKDQTVSQKERRETSKQKQKGKENPDMANPSAMSTTAKGS) are disordered. The span at 103-120 (QKERRETSKQKQKGKENP) shows a compositional bias: basic and acidic residues.

In terms of assembly, interacts with RGL2. Interacts with EEA1. (Microbial infection) Interacts with myxoma virus protein M062. In terms of tissue distribution, widely expressed. Very low levels are detected in skeletal muscle. Not detected in brain. Down-regulated in aggressive fibromatosis, as well as in breast and colon cancers. Up-regulated in fibroblasts from patients with normophosphatemic tumoral calcinosis (NFTC).

It is found in the cytoplasm. Functionally, double-stranded nucleic acid binding that acts as an antiviral factor by playing an essential role in the formation of cytoplasmic antiviral granules. May play a role in the inflammatory response to tissue injury and the control of extra-osseous calcification, acting as a downstream target of TNF-alpha signaling. Involved in the regulation of EGR1, in coordination with RGL2. May be involved in endosome fusion. The polypeptide is Sterile alpha motif domain-containing protein 9 (SAMD9) (Homo sapiens (Human)).